The chain runs to 508 residues: Photosystem II CP47 reaction center protein (508 aa).

6 helical membrane-spanning segments follow: residues 21–36 (SVHI…WAGS), 101–115 (IVFS…IWHW), 140–156 (GIHL…FGAF), 203–218 (IAAG…FHLS), 237–252 (VLSS…AFVV), and 457–472 (SFAL…HGAR).

Belongs to the PsbB/PsbC family. PsbB subfamily. PSII is composed of 1 copy each of membrane proteins PsbA, PsbB, PsbC, PsbD, PsbE, PsbF, PsbH, PsbI, PsbJ, PsbK, PsbL, PsbM, PsbT, PsbX, PsbY, PsbZ, Psb30/Ycf12, at least 3 peripheral proteins of the oxygen-evolving complex and a large number of cofactors. It forms dimeric complexes. The cofactor is Binds multiple chlorophylls. PSII binds additional chlorophylls, carotenoids and specific lipids..

It localises to the plastid. The protein resides in the chloroplast thylakoid membrane. One of the components of the core complex of photosystem II (PSII). It binds chlorophyll and helps catalyze the primary light-induced photochemical processes of PSII. PSII is a light-driven water:plastoquinone oxidoreductase, using light energy to abstract electrons from H(2)O, generating O(2) and a proton gradient subsequently used for ATP formation. This chain is Photosystem II CP47 reaction center protein, found in Platanus occidentalis (Sycamore).